We begin with the raw amino-acid sequence, 66 residues long: Conotoxin mr5.2 (66 aa).

A signal peptide spans 1 to 19 (MRCVPVFVILLLLIASAPT). A propeptide spanning residues 20–48 (VDAQLKTKDDMPLASFHANVKRTLQILRD) is cleaved from the precursor. 4-carboxyglutamate is present on residues Glu-57 and Glu-61. Asparagine amide is present on Asn-65.

In terms of processing, contains 2 disulfide bonds that can be either 'C1-C3, C2-C4' or 'C1-C4, C2-C3', since these disulfide connectivities have been observed for conotoxins with cysteine framework V (for examples, see AC P0DQQ7 and AC P81755). Expressed by the venom duct.

The protein resides in the secreted. The protein is Conotoxin mr5.2 of Conus marmoreus (Marble cone).